Consider the following 634-residue polypeptide: Alpha-L-iduronidase (634 aa).

Positions 1–16 are cleaved as a signal peptide; it reads MLTFFAAFLAAPLALA. Pro44, Leu46, and His48 together coordinate alpha-D-mannopyranose. His81 lines the alpha-L-iduronate pocket. N-linked (GlcNAc...) asparagine glycosylation is present at Asn100. Asn171 and Glu172 together coordinate alpha-L-iduronate. Glu172 functions as the Proton donor in the catalytic mechanism. 2 N-linked (GlcNAc...) asparagine glycosylation sites follow: Asn180 and Asn233. 3 residues coordinate alpha-L-iduronate: Lys254, Glu289, and Gly295. Glu289 serves as the catalytic Nucleophile. Trp296 lines the alpha-D-mannopyranose pocket. Asn326 is a glycosylation site (N-linked (GlcNAc...) asparagine). Positions 339 and 353 each coordinate alpha-L-iduronate. 3 N-linked (GlcNAc...) asparagine glycosylation sites follow: Asn362, Asn405, and Asn441. A disulfide bridge connects residues Cys531 and Cys567.

The protein belongs to the glycosyl hydrolase 39 family. In terms of assembly, monomer. N-glycosylation contributes to substrate binding and is required for full enzymatic activity. Ubiquitous.

The protein localises to the lysosome. The catalysed reaction is Hydrolysis of unsulfated alpha-L-iduronosidic linkages in dermatan sulfate.. The polypeptide is Alpha-L-iduronidase (Idua) (Mus musculus (Mouse)).